We begin with the raw amino-acid sequence, 338 residues long: MNLQRFPRYPLTFGPTPIQPLKRLSAHLGGKVELYAKREDCNSGLAFGGNKTRKLEYLIPDALAQGADTLVSIGGVQSNQTRQVAAVAAHLGMKCVLVQEHWVNYDDPVYDRVGNIQLSRMMGADVRLVADGFDIGIRRSWEDAMESVRQAGGKPYPIPAGCSEHPLGGLGFVGFAEEVREQEAQLGFRFDYVVVCSVTGSTQAGMVVGFAADGRADRVIGIDASATPERTREQITRIARHTAELVELGRPIADADVVLDTRYAGPEYGLPNDGTLEAIRLCARLEGVLTDPVYEGKSMHGMIDMVRRGEFEPGSKVLYAHLGGVPALSAYAEIFRDG.

Lysine 51 carries the N6-(pyridoxal phosphate)lysine modification. The active-site Nucleophile is serine 78.

Belongs to the ACC deaminase/D-cysteine desulfhydrase family. Homotrimer. Pyridoxal 5'-phosphate is required as a cofactor.

The enzyme catalyses 1-aminocyclopropane-1-carboxylate + H2O = 2-oxobutanoate + NH4(+). Its function is as follows. Catalyzes a cyclopropane ring-opening reaction, the irreversible conversion of 1-aminocyclopropane-1-carboxylate (ACC) to ammonia and alpha-ketobutyrate. Allows growth on ACC as a nitrogen source. This is 1-aminocyclopropane-1-carboxylate deaminase from Burkholderia vietnamiensis (strain G4 / LMG 22486) (Burkholderia cepacia (strain R1808)).